A 43-amino-acid polypeptide reads, in one-letter code: Protein PsbN (43 aa).

The helical transmembrane segment at 5–27 threads the bilayer; it reads TLVXISISGSLVSFTGYALYTAF.

This sequence belongs to the PsbN family.

The protein resides in the plastid. Its subcellular location is the chloroplast thylakoid membrane. In terms of biological role, may play a role in photosystem I and II biogenesis. In Calycanthus floridus (Eastern sweetshrub), this protein is Protein PsbN.